Here is a 122-residue protein sequence, read N- to C-terminus: MQDNSSHSRESASAGDDPLGIDKLTVDYDYLLYKMRDYVQSIQLDTTELCKKQNEVMVNGIIENTIDKNIAKFKELLEKCDTLENHYEMLNQLAIITDTFKERIAEAVNNYNSLKKGASKSK.

Residues 1 to 10 (MQDNSSHSRE) show a composition bias toward basic and acidic residues. The segment at 1–21 (MQDNSSHSRESASAGDDPLGI) is disordered. Residues 63-95 (ENTIDKNIAKFKELLEKCDTLENHYEMLNQLAI) adopt a coiled-coil conformation.

Belongs to the BLOC1S4 family. In terms of assembly, component of the biogenesis of lysosome-related organelles complex-1 (BLOC-1) composed of at least BLI1, BLS1, CNL1, KXD1, SNN1 and VAB2.

It localises to the cytoplasm. Component of the biogenesis of lysosome-related organelles complex-1 (BLOC-1), a complex that is involved in endosomal cargo sorting. The protein is Biogenesis of lysosome-related organelles complex 1 subunit CNL1 (CNL1) of Saccharomyces cerevisiae (strain ATCC 204508 / S288c) (Baker's yeast).